A 698-amino-acid chain; its full sequence is Polyribonucleotide nucleotidyltransferase (698 aa).

The Mg(2+) site is built by D490 and D496. Positions 557-616 (PKVVTMTIKPDKIRDVIGPGGKKINEIIDETGVKLDIEQDGTIFIGAVDQAMINRAREII) constitute a KH domain. In terms of domain architecture, S1 motif spans 626–694 (GQTYQATVKR…KQGRVNASHR (69 aa)).

The protein belongs to the polyribonucleotide nucleotidyltransferase family. Mg(2+) serves as cofactor.

It is found in the cytoplasm. It catalyses the reaction RNA(n+1) + phosphate = RNA(n) + a ribonucleoside 5'-diphosphate. In terms of biological role, involved in mRNA degradation. Catalyzes the phosphorolysis of single-stranded polyribonucleotides processively in the 3'- to 5'-direction. The protein is Polyribonucleotide nucleotidyltransferase of Staphylococcus aureus (strain MRSA252).